The sequence spans 300 residues: Glutamyl-Q tRNA(Asp) synthetase (300 aa).

L-glutamate is bound by residues 14–18 and E50; that span reads RFAPT. The 'HIGH' region motif lies at 17-27; sequence PTPSGFLHFGS. Zn(2+) contacts are provided by C106, C108, Y120, and C124. Y177 and R195 together coordinate L-glutamate. The short motif at 233 to 237 is the 'KMSKS' region element; the sequence is KLGKS. Position 236 (K236) interacts with ATP.

This sequence belongs to the class-I aminoacyl-tRNA synthetase family. GluQ subfamily. Zn(2+) is required as a cofactor.

Catalyzes the tRNA-independent activation of glutamate in presence of ATP and the subsequent transfer of glutamate onto a tRNA(Asp). Glutamate is transferred on the 2-amino-5-(4,5-dihydroxy-2-cyclopenten-1-yl) moiety of the queuosine in the wobble position of the QUC anticodon. This Pseudomonas putida (strain ATCC 47054 / DSM 6125 / CFBP 8728 / NCIMB 11950 / KT2440) protein is Glutamyl-Q tRNA(Asp) synthetase.